Reading from the N-terminus, the 773-residue chain is Lon protease homolog 2, peroxisomal (773 aa).

The Lon N-terminal domain occupies 9-198 (LPVIVVDSGV…MCEKWMQMQR (190 aa)). Position 336-343 (336-343 (GPPGIGKT)) interacts with ATP. A Lon proteolytic domain is found at 587-766 (PLPPGVCFGL…EDVIEAMMEK (180 aa)). Catalysis depends on residues Ser672 and Lys715. Positions 771 to 773 (AKL) match the Microbody targeting signal motif.

The protein belongs to the peptidase S16 family.

The protein localises to the peroxisome matrix. The catalysed reaction is Hydrolysis of proteins in presence of ATP.. ATP-dependent serine protease that mediates the selective degradation of misfolded and unassembled polypeptides in the peroxisomal matrix. Necessary for type 2 peroxisome targeting signal (PTS2)-containing protein processing and facilitates peroxisome matrix protein import. This chain is Lon protease homolog 2, peroxisomal, found in Caenorhabditis briggsae.